Reading from the N-terminus, the 283-residue chain is Acetylglutamate kinase (283 aa).

Substrate contacts are provided by residues 64 to 65 (GG), arginine 86, and asparagine 181.

It belongs to the acetylglutamate kinase family. ArgB subfamily.

The protein resides in the cytoplasm. It carries out the reaction N-acetyl-L-glutamate + ATP = N-acetyl-L-glutamyl 5-phosphate + ADP. The protein operates within amino-acid biosynthesis; L-arginine biosynthesis; N(2)-acetyl-L-ornithine from L-glutamate: step 2/4. Functionally, catalyzes the ATP-dependent phosphorylation of N-acetyl-L-glutamate. The chain is Acetylglutamate kinase from Sulfurovum sp. (strain NBC37-1).